A 73-amino-acid polypeptide reads, in one-letter code: uncharacterized protein (73 aa).

A signal peptide spans 1–21 (MTLFSSLSSLSTGSLKSSVSS). The span at 1–38 (MTLFSSLSSLSTGSLKSSVSSIETGSSSGSFGSNETSG) shows a compositional bias: low complexity. The segment at 1–43 (MTLFSSLSSLSTGSLKSSVSSIETGSSSGSFGSNETSGWGSHH) is disordered. Residue Asn34 is glycosylated (N-linked (GlcNAc...) asparagine).

It localises to the secreted. This is an uncharacterized protein from Dictyostelium discoideum (Social amoeba).